The following is a 253-amino-acid chain: uncharacterized protein (253 aa).

6 helical membrane-spanning segments follow: residues 17–37 (MWLL…HIIA), 46–66 (IFGF…VFVF), 93–113 (LAAS…YGIW), 139–159 (MYGL…WTVF), 172–192 (AMVL…SPLV), and 222–242 (IHLS…LLIM).

It is found in the cell membrane. This is an uncharacterized protein from Bacillus subtilis (strain 168).